The chain runs to 181 residues: Oligoribonuclease (181 aa).

Residues 8-171 form the Exonuclease domain; that stretch reads LIWIDLEMTG…DDIRESVAEL (164 aa). Tyr129 is an active-site residue.

Belongs to the oligoribonuclease family.

It is found in the cytoplasm. 3'-to-5' exoribonuclease specific for small oligoribonucleotides. The protein is Oligoribonuclease of Shigella flexneri.